We begin with the raw amino-acid sequence, 331 residues long: Ketol-acid reductoisomerase (NADP(+)) (331 aa).

One can recognise a KARI N-terminal Rossmann domain in the interval 2–182 (ARMYYDEDAN…GGTRGGVLET (181 aa)). NADP(+) contacts are provided by residues 25 to 28 (YGSQ), serine 51, serine 53, and 83 to 86 (DEVQ). Residue histidine 108 is part of the active site. Glycine 134 is a binding site for NADP(+). The 146-residue stretch at 183-328 (TFREETETDL…KDLRAMFSWL (146 aa)) folds into the KARI C-terminal knotted domain. Residues aspartate 191, glutamate 195, glutamate 227, and glutamate 231 each coordinate Mg(2+). Serine 252 lines the substrate pocket.

This sequence belongs to the ketol-acid reductoisomerase family. Mg(2+) serves as cofactor.

It carries out the reaction (2R)-2,3-dihydroxy-3-methylbutanoate + NADP(+) = (2S)-2-acetolactate + NADPH + H(+). The catalysed reaction is (2R,3R)-2,3-dihydroxy-3-methylpentanoate + NADP(+) = (S)-2-ethyl-2-hydroxy-3-oxobutanoate + NADPH + H(+). It functions in the pathway amino-acid biosynthesis; L-isoleucine biosynthesis; L-isoleucine from 2-oxobutanoate: step 2/4. Its pathway is amino-acid biosynthesis; L-valine biosynthesis; L-valine from pyruvate: step 2/4. Functionally, involved in the biosynthesis of branched-chain amino acids (BCAA). Catalyzes an alkyl-migration followed by a ketol-acid reduction of (S)-2-acetolactate (S2AL) to yield (R)-2,3-dihydroxy-isovalerate. In the isomerase reaction, S2AL is rearranged via a Mg-dependent methyl migration to produce 3-hydroxy-3-methyl-2-ketobutyrate (HMKB). In the reductase reaction, this 2-ketoacid undergoes a metal-dependent reduction by NADPH to yield (R)-2,3-dihydroxy-isovalerate. This is Ketol-acid reductoisomerase (NADP(+)) from Nostoc sp. (strain PCC 7120 / SAG 25.82 / UTEX 2576).